Consider the following 629-residue polypeptide: G1-specific transcription factors activator MSA1 (629 aa).

Basic residues predominate over residues Met-1–Arg-11. Disordered regions lie at residues Met-1–Leu-60, Ser-83–Tyr-106, Tyr-217–Gln-286, Val-455–Ser-485, and Pro-586–Gln-629. The segment covering Pro-21–Gly-37 has biased composition (polar residues). A compositionally biased stretch (polar residues) spans Ile-245–Ile-260. 2 stretches are compositionally biased toward low complexity: residues Leu-261–Pro-277 and Val-455–Gln-475. Ser-268 is subject to Phosphoserine. The span at Lys-614 to Gln-629 shows a compositional bias: basic and acidic residues.

As to quaternary structure, interacts with transcription complexes SCB-binding factor (SBF) and MCB-binding factor (MBF) at their target promoters. Interacts with MBP1 and SWI6. In terms of processing, phosphorylated by CDC28.

Functionally, activator of G1-specific transcription factors, MBF and SBF. Promotes both the timing of G1-specific gene transcription and cell cycle initiation. Associates with SBF- and MBF-regulated target promoters and this binding is maximal during the G1 phase, prior to maximum budding. Affects cell cycle initiation by advancing the timing of transcription of G1-specific genes. Overexpression advances the timing of SBF-dependent transcription and budding. Depletion delays both indicators of cell cycle initiation. The polypeptide is G1-specific transcription factors activator MSA1 (MSA1) (Saccharomyces cerevisiae (strain ATCC 204508 / S288c) (Baker's yeast)).